Here is a 412-residue protein sequence, read N- to C-terminus: Ornithine cyclodeaminase (412 aa).

10 residues coordinate NAD(+): asparagine 237, alanine 238, aspartate 316, threonine 348, methionine 349, leucine 350, histidine 351, aspartate 369, aspartate 392, and valine 393.

Belongs to the AgrE/ArgZ ornithine cyclodeaminase family. Requires NAD(+) as cofactor.

It catalyses the reaction L-ornithine = L-proline + NH4(+). In terms of biological role, catalyzes the conversion of ornithine to proline, with the release of ammonia. The sequence is that of Ornithine cyclodeaminase from Methanopyrus kandleri (strain AV19 / DSM 6324 / JCM 9639 / NBRC 100938).